A 121-amino-acid polypeptide reads, in one-letter code: Basic phospholipase A2 homolog GodMT-II (121 aa).

Cystine bridges form between cysteine 26/cysteine 115, cysteine 28/cysteine 44, cysteine 43/cysteine 95, cysteine 49/cysteine 121, cysteine 50/cysteine 88, cysteine 57/cysteine 81, and cysteine 75/cysteine 86. Positions lysine 105 to lysine 117 are important for membrane-damaging activities in eukaryotes and bacteria; heparin-binding.

The protein belongs to the phospholipase A2 family. Group II subfamily. K49 sub-subfamily. Monomer. Expressed by the venom gland.

Its subcellular location is the secreted. Snake venom phospholipase A2 homolog that lacks enzymatic activity but shows high myotoxic activities. In vivo, induces a mild edema when subcutaneously injected into mice foot pad. The sequence is that of Basic phospholipase A2 homolog GodMT-II from Cerrophidion godmani (Porthidium godmani).